The chain runs to 241 residues: Carboxy-S-adenosyl-L-methionine synthase (241 aa).

Residues Y38, 63–65 (GCS), 88–89 (DN), 116–117 (DI), N131, and R198 contribute to the S-adenosyl-L-methionine site.

This sequence belongs to the class I-like SAM-binding methyltransferase superfamily. Cx-SAM synthase family. As to quaternary structure, homodimer.

It catalyses the reaction prephenate + S-adenosyl-L-methionine = carboxy-S-adenosyl-L-methionine + 3-phenylpyruvate + H2O. Catalyzes the conversion of S-adenosyl-L-methionine (SAM) to carboxy-S-adenosyl-L-methionine (Cx-SAM). This Histophilus somni (strain 129Pt) (Haemophilus somnus) protein is Carboxy-S-adenosyl-L-methionine synthase.